The chain runs to 351 residues: UDP-3-O-acylglucosamine N-acyltransferase (351 aa).

Catalysis depends on histidine 239, which acts as the Proton acceptor.

Belongs to the transferase hexapeptide repeat family. LpxD subfamily. As to quaternary structure, homotrimer.

The catalysed reaction is a UDP-3-O-[(3R)-3-hydroxyacyl]-alpha-D-glucosamine + a (3R)-hydroxyacyl-[ACP] = a UDP-2-N,3-O-bis[(3R)-3-hydroxyacyl]-alpha-D-glucosamine + holo-[ACP] + H(+). Its pathway is bacterial outer membrane biogenesis; LPS lipid A biosynthesis. Functionally, catalyzes the N-acylation of UDP-3-O-acylglucosamine using 3-hydroxyacyl-ACP as the acyl donor. Is involved in the biosynthesis of lipid A, a phosphorylated glycolipid that anchors the lipopolysaccharide to the outer membrane of the cell. This is UDP-3-O-acylglucosamine N-acyltransferase from Vibrio cholerae serotype O1 (strain ATCC 39315 / El Tor Inaba N16961).